We begin with the raw amino-acid sequence, 1316 residues long: DNA-directed RNA polymerase subunit beta' (1316 aa).

Cys-60, Cys-62, Cys-75, and Cys-78 together coordinate Zn(2+). Mg(2+) is bound by residues Asp-535, Asp-537, and Asp-539. Zn(2+)-binding residues include Cys-891, Cys-968, Cys-975, and Cys-978.

The protein belongs to the RNA polymerase beta' chain family. As to quaternary structure, the RNAP catalytic core consists of 2 alpha, 1 beta, 1 beta' and 1 omega subunit. When a sigma factor is associated with the core the holoenzyme is formed, which can initiate transcription. Mg(2+) is required as a cofactor. Requires Zn(2+) as cofactor.

It carries out the reaction RNA(n) + a ribonucleoside 5'-triphosphate = RNA(n+1) + diphosphate. Its function is as follows. DNA-dependent RNA polymerase catalyzes the transcription of DNA into RNA using the four ribonucleoside triphosphates as substrates. The chain is DNA-directed RNA polymerase subunit beta' from Mycobacterium tuberculosis (strain ATCC 25177 / H37Ra).